The sequence spans 215 residues: Cytochrome b6 (215 aa).

A helical transmembrane segment spans residues 32–52; it reads IFYCLGGITFTCFLLQVASGF. Cysteine 35 provides a ligand contact to heme c. 2 residues coordinate heme b: histidine 86 and histidine 100. 3 helical membrane-spanning segments follow: residues 90-110, 116-136, and 186-206; these read ASMM…TGGF, LTWV…VTGY, and LHTF…FLMI. Histidine 187 and histidine 202 together coordinate heme b.

This sequence belongs to the cytochrome b family. PetB subfamily. In terms of assembly, the 4 large subunits of the cytochrome b6-f complex are cytochrome b6, subunit IV (17 kDa polypeptide, PetD), cytochrome f and the Rieske protein, while the 4 small subunits are PetG, PetL, PetM and PetN. The complex functions as a dimer. Heme b is required as a cofactor. The cofactor is heme c.

It is found in the plastid. It localises to the chloroplast thylakoid membrane. Component of the cytochrome b6-f complex, which mediates electron transfer between photosystem II (PSII) and photosystem I (PSI), cyclic electron flow around PSI, and state transitions. The chain is Cytochrome b6 from Coleochaete orbicularis (Charophycean green alga).